The sequence spans 555 residues: MARVEL domain-containing protein 2 (555 aa).

Over residues 1–20 (MSSSDARSRIRDRGYSEVPR) the composition is skewed to basic and acidic residues. The disordered stretch occupies residues 1-71 (MSSSDARSRI…FYSSDTEEPA (71 aa)). Residues 1–191 (MSSSDARSRI…YMKSWAGLLR (191 aa)) lie on the Cytoplasmic side of the membrane. The segment covering 46–59 (PLPPPPLPLQPPFG) has biased composition (pro residues). Residues Ser-117, Ser-121, and Ser-158 each carry the phosphoserine modification. Positions 118 to 142 (PPASPARANHHPYKDPSRGSQGTFN) are disordered. The residue at position 163 (Thr-163) is a Phosphothreonine. Residues 185–364 (SWAGLLRILG…SALVCLKLWR (180 aa)) enclose the MARVEL domain. A helical membrane pass occupies residues 192–212 (ILGVVELLLGAGVFACVTAYI). Over 213–251 (HKDNEWYNLFGYTQPYGMGGLGSLGNTYGGYYYSGPKTP) the chain is Extracellular. A helical membrane pass occupies residues 252-272 (FVLVVAGLAWITTIIILVLGM). Residues 273-288 (SMYYRTILLDSNWWPL) lie on the Cytoplasmic side of the membrane. A helical transmembrane segment spans residues 289–309 (TEFGVNVALFILYMAAAIVYV). At 310–338 (NDTNRGGLCYYPLFNTPMNAMFCRVEGGQ) the chain is on the extracellular side. The chain crosses the membrane as a helical span at residues 339 to 359 (IAAMIFLFVTMIVYLVSALVC). The Cytoplasmic portion of the chain corresponds to 360-555 (LKLWRHEAAR…VMNWDTQGYP (196 aa)). A Phosphoserine modification is found at Ser-384. Lys-408 is covalently cross-linked (Glycyl lysine isopeptide (Lys-Gly) (interchain with G-Cter in ubiquitin)). In terms of domain architecture, OCEL spans 437–548 (PDYVAKYPVI…RIQEYDKVMN (112 aa)). The stretch at 521–545 (EKKERCDYLKNKLSHIKQRIQEYDK) forms a coiled coil.

Belongs to the ELL/occludin family. In terms of assembly, interacts with TJP1. Interacts with the ubiquitin ligase ITCH. Interacts (via C-terminal cytoplasmic domain) with LSR (via the cytoplasmic domain), ILDR1 and ILDR2; the interaction is required to recruit MARVELD2 to tricellular contacts. Post-translationally, ubiquitinated by ITCH; but this ubiquitination does not lead to proteasomal degradation. Polyubiquitinated at Lys-408 via 'Lys-63'-linked ubiquitin chains; deubiquitinated by USP53. In terms of processing, phosphorylated. As to expression, detected in small intestine, stomach and kidney, in epithelial cells. Detected in pancreas, retina and lung, and in stria vascularis, utricle and the organ of Conti in the inner ear (at protein level). Predominantly detected in small intestine, lung and kidney, with lower levels in liver, testis and brain. In colon, expressed in the entire crypts.

It localises to the cell membrane. The protein localises to the cell junction. The protein resides in the tight junction. Its function is as follows. Plays a role in the formation of tricellular tight junctions and of epithelial barriers. Required for normal hearing via its role in the separation of the endolymphatic and perilymphatic spaces of the organ of Corti in the inner ear, and for normal survival of hair cells in the organ of Corti. In Mus musculus (Mouse), this protein is MARVEL domain-containing protein 2.